Consider the following 20-residue polypeptide: Equinatoxin-1'' (20 aa).

The plays an important role in the hemolytic activity stretch occupies residues 3-12 (AVAGAVIEGA). Positions 11–20 (GATLTFNVLQ) are N-terminal region.

It belongs to the actinoporin family. Sea anemone subfamily. In terms of assembly, octamer or nonamer in membranes. Monomer in the soluble state.

The protein localises to the secreted. The protein resides in the nematocyst. It localises to the target cell membrane. Pore-forming protein that forms cations-selective hydrophilic pores of around 1 nm and causes cardiac stimulation and cytolysis. Pore formation is a multi-step process that involves specific recognition of membrane sphingomyelin (but neither cholesterol nor phosphatidylcholine) using aromatic rich region and adjacent phosphocholine (POC) binding site, firm binding to the membrane (mainly driven by hydrophobic interactions) accompanied by the transfer of the N-terminal region to the lipid-water interface and finally pore formation after oligomerization of monomers. Cytolytic effects include red blood cells hemolysis, platelet aggregation and lysis, cytotoxic and cytostatic effects on fibroblasts. Lethality in mammals has been ascribed to severe vasospasm of coronary vessels, cardiac arrhythmia, and inotropic effects. The protein is Equinatoxin-1'' of Actinia equina (Beadlet anemone).